The chain runs to 100 residues: Integration host factor subunit alpha (100 aa).

Belongs to the bacterial histone-like protein family. In terms of assembly, heterodimer of an alpha and a beta chain.

This protein is one of the two subunits of integration host factor, a specific DNA-binding protein that functions in genetic recombination as well as in transcriptional and translational control. The polypeptide is Integration host factor subunit alpha (ihfA) (Zymomonas mobilis subsp. mobilis (strain ATCC 31821 / ZM4 / CP4)).